Here is a 419-residue protein sequence, read N- to C-terminus: UDP-N-acetylglucosamine 1-carboxyvinyltransferase 1 (419 aa).

Phosphoenolpyruvate is bound at residue 22–23 (KN). A UDP-N-acetyl-alpha-D-glucosamine-binding site is contributed by arginine 92. Cysteine 116 (proton donor) is an active-site residue. At cysteine 116 the chain carries 2-(S-cysteinyl)pyruvic acid O-phosphothioketal. Residues 121 to 125 (RPIDL), aspartate 306, and isoleucine 328 contribute to the UDP-N-acetyl-alpha-D-glucosamine site.

The protein belongs to the EPSP synthase family. MurA subfamily.

It localises to the cytoplasm. It catalyses the reaction phosphoenolpyruvate + UDP-N-acetyl-alpha-D-glucosamine = UDP-N-acetyl-3-O-(1-carboxyvinyl)-alpha-D-glucosamine + phosphate. The protein operates within cell wall biogenesis; peptidoglycan biosynthesis. Its function is as follows. Cell wall formation. Adds enolpyruvyl to UDP-N-acetylglucosamine. This is UDP-N-acetylglucosamine 1-carboxyvinyltransferase 1 from Streptococcus agalactiae serotype Ia (strain ATCC 27591 / A909 / CDC SS700).